Consider the following 455-residue polypeptide: DENN domain-containing protein 11 (455 aa).

At V2 the chain carries N-acetylvaline. In terms of domain architecture, uDENN spans 15-187 (EGPAVSVPQD…QLEMPGHYSH (173 aa)). Residues 21-61 (VPQDPALQAGGWVRGGSGGGRVAAEAPRRREPEEPAPPEVL) form a disordered region. Over residues 32–41 (WVRGGSGGGR) the composition is skewed to gly residues. The residue at position 41 (R41) is an Omega-N-methylarginine. The 149-residue stretch at 214-362 (WLPSIHRYMY…LNSADREKYR (149 aa)) folds into the cDENN domain. Residues 364-455 (LNEQRQMLLY…MLVIDNPCCP (92 aa)) form the dDENN domain.

It belongs to the DENND11 family. Expressed within the somatodendritic compartment of neurons, is also present on dendritic growth cones, but is not found in astrocytes.

Functionally, probable guanine nucleotide exchange factor (GEF). May promote the exchange of GDP to GTP, converting inactive GDP-bound small GTPases into their active GTP-bound form. May play a role in neuritogenesis, as well as in neuronal recovery and/or restructuring in the hippocampus following transient cerebral ischemia. The polypeptide is DENN domain-containing protein 11 (Dennd11) (Rattus norvegicus (Rat)).